Consider the following 59-residue polypeptide: Putative zinc finger protein ORF59a (59 aa).

Residues 11–33 (YQCLRCGLTFRTKKQLIRHLVNT) form a C2H2-type; degenerate zinc finger.

The protein is Putative zinc finger protein ORF59a of Acidianus hospitalis (AFV-1).